The following is a 183-amino-acid chain: Ankyrin repeat domain-containing protein 39 (183 aa).

4 ANK repeats span residues 30-59 (DFERGIWSAALNGDLGRVKHLIQKAEDPSQ), 63-92 (AGYTALHYASRNGHYAVCQFLLESGAKCDA), 96-125 (GGATALHRASYCGHTEIARLLLSHGSNPRV), and 129-158 (DGMTSLHKAAERGHGDICSLLLQHSPALKA). Serine 153 bears the Phosphoserine mark.

The protein belongs to the ANKRD39 family.

In Homo sapiens (Human), this protein is Ankyrin repeat domain-containing protein 39 (ANKRD39).